Here is a 103-residue protein sequence, read N- to C-terminus: SOSS complex subunit C (103 aa).

This sequence belongs to the SOSS-C family. Belongs to the multiprotein complex Integrator. Component of the SOSS complex, composed of SOSS-B (SOSS-B1/NABP2 or SOSS-B2/NABP1), SOSS-A/INTS3 and SOSS-C/INIP.

The protein resides in the nucleus. In terms of biological role, component of the SOSS complex, a multiprotein complex that functions downstream of the MRN complex to promote DNA repair and G2/M checkpoint. The SOSS complex associates with single-stranded DNA at DNA lesions and influences diverse endpoints in the cellular DNA damage response including cell-cycle checkpoint activation, recombinational repair and maintenance of genomic stability. Required for efficient homologous recombination-dependent repair of double-strand breaks (DSBs). The protein is SOSS complex subunit C (INIP) of Gallus gallus (Chicken).